Here is a 190-residue protein sequence, read N- to C-terminus: ATP synthase subunit b (190 aa).

The chain crosses the membrane as a helical span at residues 34–54 (LDIFETNLINLAILVGILFYF).

The protein belongs to the ATPase B chain family. F-type ATPases have 2 components, F(1) - the catalytic core - and F(0) - the membrane proton channel. F(1) has five subunits: alpha(3), beta(3), gamma(1), delta(1), epsilon(1). F(0) has four main subunits: a(1), b(1), b'(1) and c(10-14). The alpha and beta chains form an alternating ring which encloses part of the gamma chain. F(1) is attached to F(0) by a central stalk formed by the gamma and epsilon chains, while a peripheral stalk is formed by the delta, b and b' chains.

The protein localises to the cellular thylakoid membrane. Its function is as follows. F(1)F(0) ATP synthase produces ATP from ADP in the presence of a proton or sodium gradient. F-type ATPases consist of two structural domains, F(1) containing the extramembraneous catalytic core and F(0) containing the membrane proton channel, linked together by a central stalk and a peripheral stalk. During catalysis, ATP synthesis in the catalytic domain of F(1) is coupled via a rotary mechanism of the central stalk subunits to proton translocation. Functionally, component of the F(0) channel, it forms part of the peripheral stalk, linking F(1) to F(0). The chain is ATP synthase subunit b from Nostoc punctiforme (strain ATCC 29133 / PCC 73102).